The following is a 240-amino-acid chain: Ribonuclease HII (240 aa).

An RNase H type-2 domain is found at arginine 31–alanine 222. Residues aspartate 37, glutamate 38, and aspartate 130 each contribute to the a divalent metal cation site.

Belongs to the RNase HII family. Mn(2+) is required as a cofactor. Requires Mg(2+) as cofactor.

The protein resides in the cytoplasm. The enzyme catalyses Endonucleolytic cleavage to 5'-phosphomonoester.. In terms of biological role, endonuclease that specifically degrades the RNA of RNA-DNA hybrids. This Xanthomonas campestris pv. campestris (strain B100) protein is Ribonuclease HII.